We begin with the raw amino-acid sequence, 352 residues long: MQFIDQAEIQVEAGKGGDGMVAFRREKFVPAGGPAGGNGGRGGSVVLVAVANLQTLLDFKFQRVFKAENGKRGGPKNMTGAGGSDRLIEVPPGTMIYDRETEELLGDLVKPGQTCCVAQGGKGGLGNKHFLSNSNRAPEYALPGLDGEVRMLRLELKLLAEVGIIGLPNAGKSTLIAALSAARPKIADYPFTTLVPNLGVVRKPTGDGTVFADIPGLIEGASAGLGLGHEFLRHIERTRLLLHLVDITDVDPVENFETIQNELEVYGRSLEDKRQVLALNKVDAVDVKGAEIQELVNRFREISGGKVFLISAVAGIGLEELMQEIWGLLEMEEEVKSSELTPTPPLVSREES.

The Obg domain maps to 1-159 (MQFIDQAEIQ…RMLRLELKLL (159 aa)). Residues 160–330 (AEVGIIGLPN…LMQEIWGLLE (171 aa)) enclose the OBG-type G domain. GTP-binding positions include 166–173 (GLPNAGKS), 191–195 (FTTLV), 213–216 (DIPG), 280–283 (NKVD), and 311–313 (SAV). Mg(2+)-binding residues include serine 173 and threonine 193.

This sequence belongs to the TRAFAC class OBG-HflX-like GTPase superfamily. OBG GTPase family. As to quaternary structure, monomer. Requires Mg(2+) as cofactor.

It localises to the cytoplasm. Its function is as follows. An essential GTPase which binds GTP, GDP and possibly (p)ppGpp with moderate affinity, with high nucleotide exchange rates and a fairly low GTP hydrolysis rate. Plays a role in control of the cell cycle, stress response, ribosome biogenesis and in those bacteria that undergo differentiation, in morphogenesis control. The polypeptide is GTPase Obg (Trichodesmium erythraeum (strain IMS101)).